The primary structure comprises 782 residues: Chondroitin proteoglycan 4 (782 aa).

Positions 1-18 (MRLVYSLIFLLFIPFSHP) are cleaved as a signal peptide. N-linked (GlcNAc...) asparagine glycans are attached at residues N76, N208, N462, N468, N474, and N503. Residues 513–726 (ISEKSTEESS…EDQGSGNYKK (214 aa)) form a disordered region. Low complexity-rich tracts occupy residues 520 to 532 (ESSG…SGDG), 548 to 566 (SGSS…SSGE), 573 to 612 (SSGS…SSDT), 662 to 672 (FGESSGSSGES), and 688 to 722 (SGSS…QGSG). An N-linked (GlcNAc...) asparagine glycan is attached at N559. A glycan (O-linked (Xyl...) (chondroitin sulfate) serine) is linked at S691. N-linked (GlcNAc...) asparagine glycosylation is present at N699. Residues S701, S704, S708, S714, and S721 are each glycosylated (O-linked (Xyl...) (chondroitin sulfate) serine). N743 carries N-linked (GlcNAc...) asparagine glycosylation.

This Caenorhabditis elegans protein is Chondroitin proteoglycan 4.